We begin with the raw amino-acid sequence, 368 residues long: DNA replication and repair protein RecF (368 aa).

30–37 (GNNAQGKT) is a binding site for ATP.

Belongs to the RecF family.

Its subcellular location is the cytoplasm. Its function is as follows. The RecF protein is involved in DNA metabolism; it is required for DNA replication and normal SOS inducibility. RecF binds preferentially to single-stranded, linear DNA. It also seems to bind ATP. The sequence is that of DNA replication and repair protein RecF from Streptococcus pyogenes serotype M6 (strain ATCC BAA-946 / MGAS10394).